Reading from the N-terminus, the 476-residue chain is Bifunctional protein HldE (476 aa).

The tract at residues 1 to 318 is ribokinase; it reads MKPTLPNYDQ…AEAIHGSQDS (318 aa). Residue 195-198 coordinates ATP; the sequence is NMLE. Asp264 is a catalytic residue. Residues 344 to 476 are cytidylyltransferase; that stretch reads MTNGCFDILH…IIEAIKGGRG (133 aa).

It in the N-terminal section; belongs to the carbohydrate kinase PfkB family. This sequence in the C-terminal section; belongs to the cytidylyltransferase family. In terms of assembly, homodimer.

It carries out the reaction D-glycero-beta-D-manno-heptose 7-phosphate + ATP = D-glycero-beta-D-manno-heptose 1,7-bisphosphate + ADP + H(+). The enzyme catalyses D-glycero-beta-D-manno-heptose 1-phosphate + ATP + H(+) = ADP-D-glycero-beta-D-manno-heptose + diphosphate. Its pathway is nucleotide-sugar biosynthesis; ADP-L-glycero-beta-D-manno-heptose biosynthesis; ADP-L-glycero-beta-D-manno-heptose from D-glycero-beta-D-manno-heptose 7-phosphate: step 1/4. It functions in the pathway nucleotide-sugar biosynthesis; ADP-L-glycero-beta-D-manno-heptose biosynthesis; ADP-L-glycero-beta-D-manno-heptose from D-glycero-beta-D-manno-heptose 7-phosphate: step 3/4. In terms of biological role, catalyzes the phosphorylation of D-glycero-D-manno-heptose 7-phosphate at the C-1 position to selectively form D-glycero-beta-D-manno-heptose-1,7-bisphosphate. Catalyzes the ADP transfer from ATP to D-glycero-beta-D-manno-heptose 1-phosphate, yielding ADP-D-glycero-beta-D-manno-heptose. This chain is Bifunctional protein HldE, found in Aliivibrio fischeri (strain MJ11) (Vibrio fischeri).